We begin with the raw amino-acid sequence, 558 residues long: Phosphatidylserine lipase ABHD16A (558 aa).

2 consecutive transmembrane segments (helical) span residues 60–80 and 93–113; these read ILAL…FAFF and VVPF…VACL. Over 114 to 558 the chain is Cytoplasmic; the sequence is RGIGRWTNPQ…AQNFQMPWHL (445 aa). The 127-residue stretch at 281–407 folds into the AB hydrolase-1 domain; sequence LVICCEGNAG…LVTRTVRQHL (127 aa). Active-site charge relay system residues include serine 355, aspartate 430, and histidine 507.

It belongs to the AB hydrolase superfamily. ABHD16 family.

It is found in the membrane. The catalysed reaction is 1-heptadecanoyl-2-(5Z,8Z,11Z,14Z-eicosatetraenoyl)-sn-glycero-3-phosphoserine + H2O = 1-heptadecanoyl-sn-glycero-3-phosphoserine + (5Z,8Z,11Z,14Z)-eicosatetraenoate + H(+). It carries out the reaction 1-hexadecanoyl-2-(9Z-octadecenoyl)-sn-glycero-3-phospho-L-serine + H2O = 1-hexadecanoyl-sn-glycero-3-phospho-L-serine + (9Z)-octadecenoate + H(+). It catalyses the reaction 1-octadecanoyl-2-(9Z,12Z-octadecadienoyl)-sn-glycero-3-phosphoserine + H2O = 1-octadecanoyl-sn-glycero-3-phosphoserine + (9Z,12Z)-octadecadienoate + H(+). The enzyme catalyses 1-heptadecanoyl-2-(5Z,8Z,11Z,14Z-eicosatetraenoyl)-sn-glycero-3-phosphocholine + H2O = 1-heptadecanoyl-sn-glycero-3-phosphocholine + (5Z,8Z,11Z,14Z)-eicosatetraenoate + H(+). The catalysed reaction is 1-hexadecanoyl-2-(9Z-octadecenoyl)-sn-glycero-3-phosphoglycerol + H2O = 1-hexadecanoyl-sn-glycero-3-phosphoglycerol + (9Z)-octadecenoate + H(+). It carries out the reaction 1-hexadecanoyl-2-(9Z-octadecenoyl)-sn-glycero-3-phospho-(1D-myo-inositol) + H2O = 1-hexadecanoyl-sn-glycero-3-phospho-(1D-myo-inositol) + (9Z)-octadecenoate + H(+). It catalyses the reaction 1-heptadecanoyl-2-(5Z,8Z,11Z,14Z-eicosatetraenoyl)-sn-glycero-3-phosphoethanolamine + H2O = 1-heptadecanoyl-sn-glycero-3-phosphoethanolamine + (5Z,8Z,11Z,14Z)-eicosatetraenoate + H(+). The enzyme catalyses 1-hexadecanoyl-2-(9Z-octadecenoyl)-sn-glycero-3-phospho-(1'-sn-glycerol) + H2O = 1-hexadecanoyl-sn-glycero-3-phospho-(1'-sn-glycerol) + (9Z)-octadecenoate + H(+). The catalysed reaction is Hydrolyzes glycerol monoesters of long-chain fatty acids.. It carries out the reaction 1-tetradecanoylglycerol + H2O = tetradecanoate + glycerol + H(+). It catalyses the reaction 2-hexadecanoylglycerol + H2O = glycerol + hexadecanoate + H(+). The enzyme catalyses 1-(9Z-octadecenoyl)-glycerol + H2O = glycerol + (9Z)-octadecenoate + H(+). The catalysed reaction is 2-(9Z-octadecenoyl)-glycerol + H2O = glycerol + (9Z)-octadecenoate + H(+). It carries out the reaction 2-(9Z,12Z-octadecadienoyl)-glycerol + H2O = (9Z,12Z)-octadecadienoate + glycerol + H(+). It catalyses the reaction 1-(5Z,8Z,11Z,14Z-eicosatetraenoyl)-glycerol + H2O = glycerol + (5Z,8Z,11Z,14Z)-eicosatetraenoate + H(+). The enzyme catalyses 2-(5Z,8Z,11Z,14Z-eicosatetraenoyl)-glycerol + H2O = glycerol + (5Z,8Z,11Z,14Z)-eicosatetraenoate + H(+). The catalysed reaction is prostaglandin D2-1-glycerol ester + H2O = prostaglandin D2 + glycerol + H(+). It carries out the reaction 2-glyceryl-15-deoxy-Delta(12,14)-prostaglandin J2 + H2O = 15-deoxy-Delta(12,14)-prostaglandin J2 + glycerol + H(+). It catalyses the reaction 1-(9Z,12Z-octadecadienoyl)-glycerol + H2O = (9Z,12Z)-octadecadienoate + glycerol + H(+). Functionally, phosphatidylserine (PS) lipase that mediates the hydrolysis of phosphatidylserine to generate lysophosphatidylserine (LPS). LPS constitutes a class of signaling lipids that regulates immunological and neurological processes. Has no activity towards diacylglycerol, triacylglycerol or lysophosphatidylserine lipase. Also has monoacylglycerol lipase activity, with preference for 1-(9Z,12Z-octadecadienoyl)-glycerol (1-LG) and 2-glyceryl-15-deoxy-Delta(12,14)-prostaglandin J2 (15d-PGJ(2)-G). The sequence is that of Phosphatidylserine lipase ABHD16A from Pongo abelii (Sumatran orangutan).